A 251-amino-acid chain; its full sequence is Haloacid dehalogenase-like hydrolase domain-containing protein 3 (251 aa).

Position 15 is an N6-acetyllysine; alternate (Lys-15). Lys-15 bears the N6-succinyllysine; alternate mark. Residue Lys-130 is modified to N6-acetyllysine.

Belongs to the HAD-like hydrolase superfamily.

The chain is Haloacid dehalogenase-like hydrolase domain-containing protein 3 (HDHD3) from Bos taurus (Bovine).